The sequence spans 316 residues: Ornithine carbamoyltransferase (316 aa).

Carbamoyl phosphate-binding positions include 57–60, Gln-84, Arg-108, and 135–138; these read STRT and HPCQ. L-ornithine-binding positions include Asn-166, Asp-230, and 234–235; that span reads SM. Residues 269–270 and Arg-297 each bind carbamoyl phosphate; that span reads CL.

It belongs to the aspartate/ornithine carbamoyltransferase superfamily. OTCase family.

It localises to the cytoplasm. It catalyses the reaction carbamoyl phosphate + L-ornithine = L-citrulline + phosphate + H(+). It functions in the pathway amino-acid biosynthesis; L-arginine biosynthesis; L-arginine from L-ornithine and carbamoyl phosphate: step 1/3. Functionally, reversibly catalyzes the transfer of the carbamoyl group from carbamoyl phosphate (CP) to the N(epsilon) atom of ornithine (ORN) to produce L-citrulline. This chain is Ornithine carbamoyltransferase, found in Bacillus cereus (strain ZK / E33L).